The following is a 409-amino-acid chain: Major capsid protein (409 aa).

The protein belongs to the lambda phage major capsid protein family. In terms of assembly, homomultimer. Interacts with the portal protein. Interacts with the decoration protein.

The protein resides in the virion. It localises to the host cytoplasm. Assembles to form an icosahedric capsid shell with a T=7 symmetry although with a diameter of about 82 nm, which is a larger volume than the usual T=7 capsids. A dramatic reconfiguration of the capsid shell that expands the procaspid from a diameter of 66 nm to a supersized capsid of 82 nm, allows packaging of the large viral DNA genome. The capsid decoration protein binds the expanded capsid and stabilizes it. This is Major capsid protein from Thermus virus P23-45 (Thermus thermophilus phage P23-45).